The following is a 103-amino-acid chain: NADH-quinone oxidoreductase subunit K (103 aa).

A run of 3 helical transmembrane segments spans residues 1–21 (MIVP…VGGV), 29–49 (ILLI…AFAG), and 62–82 (AVII…ALLV). Residues 84-103 (GRRGGGTDRADSYDRLGEES) form a disordered region. Residues 88–103 (GGTDRADSYDRLGEES) show a composition bias toward basic and acidic residues.

It belongs to the complex I subunit 4L family. As to quaternary structure, NDH-1 is composed of 14 different subunits. Subunits NuoA, H, J, K, L, M, N constitute the membrane sector of the complex.

It is found in the cell inner membrane. The enzyme catalyses a quinone + NADH + 5 H(+)(in) = a quinol + NAD(+) + 4 H(+)(out). Its function is as follows. NDH-1 shuttles electrons from NADH, via FMN and iron-sulfur (Fe-S) centers, to quinones in the respiratory chain. The immediate electron acceptor for the enzyme in this species is believed to be ubiquinone. Couples the redox reaction to proton translocation (for every two electrons transferred, four hydrogen ions are translocated across the cytoplasmic membrane), and thus conserves the redox energy in a proton gradient. The sequence is that of NADH-quinone oxidoreductase subunit K from Solidesulfovibrio magneticus (strain ATCC 700980 / DSM 13731 / RS-1) (Desulfovibrio magneticus).